Reading from the N-terminus, the 1178-residue chain is DNA-directed RNA polymerase subunit beta' (1178 aa).

Zn(2+) is bound by residues Cys-60, Cys-62, Cys-75, and Cys-78. Positions 450, 452, and 454 each coordinate Mg(2+). Zn(2+) contacts are provided by Cys-795, Cys-869, Cys-876, and Cys-879.

The protein belongs to the RNA polymerase beta' chain family. The RNAP catalytic core consists of 2 alpha, 1 beta, 1 beta' and 1 omega subunit. When a sigma factor is associated with the core the holoenzyme is formed, which can initiate transcription. Mg(2+) is required as a cofactor. Zn(2+) serves as cofactor.

It carries out the reaction RNA(n) + a ribonucleoside 5'-triphosphate = RNA(n+1) + diphosphate. In terms of biological role, DNA-dependent RNA polymerase catalyzes the transcription of DNA into RNA using the four ribonucleoside triphosphates as substrates. This is DNA-directed RNA polymerase subunit beta' from Clostridium beijerinckii (strain ATCC 51743 / NCIMB 8052) (Clostridium acetobutylicum).